A 337-amino-acid chain; its full sequence is Fructose-1,6-bisphosphatase class 1 (337 aa).

Residues Glu-89, Asp-112, Leu-114, and Asp-115 each coordinate Mg(2+). Residues 115 to 118 (DGSS), Asn-208, Tyr-241, and Lys-271 contribute to the substrate site. Residue Glu-277 coordinates Mg(2+).

This sequence belongs to the FBPase class 1 family. In terms of assembly, homotetramer. Requires Mg(2+) as cofactor.

The protein localises to the cytoplasm. The catalysed reaction is beta-D-fructose 1,6-bisphosphate + H2O = beta-D-fructose 6-phosphate + phosphate. It functions in the pathway carbohydrate biosynthesis; gluconeogenesis. This chain is Fructose-1,6-bisphosphatase class 1, found in Yersinia pseudotuberculosis serotype O:1b (strain IP 31758).